A 226-amino-acid chain; its full sequence is Lipoprotein-releasing system ATP-binding protein LolD (226 aa).

Residues 5-226 form the ABC transporter domain; sequence LRCEKISKFY…MADGVLREAS (222 aa). Residue 41–48 participates in ATP binding; the sequence is GSSGSGKS.

The protein belongs to the ABC transporter superfamily. Lipoprotein translocase (TC 3.A.1.125) family. In terms of assembly, the complex is composed of two ATP-binding proteins (LolD) and two transmembrane proteins (LolC and LolE).

The protein localises to the cell inner membrane. Its function is as follows. Part of the ABC transporter complex LolCDE involved in the translocation of mature outer membrane-directed lipoproteins, from the inner membrane to the periplasmic chaperone, LolA. Responsible for the formation of the LolA-lipoprotein complex in an ATP-dependent manner. The protein is Lipoprotein-releasing system ATP-binding protein LolD of Haemophilus ducreyi (strain 35000HP / ATCC 700724).